A 663-amino-acid chain; its full sequence is Tripartite terminase subunit 3 (663 aa).

The Walker A motif motif lies at 205 to 212 (VPRRHGKT). The short motif at 297–302 (LLIVDE) is the Walker B motif element. Glu302 (for ATPase activity) is an active-site residue. Catalysis depends on for nuclease activity residues Asp455, Glu526, and Asp640.

Belongs to the herpesviridae TRM3 protein family. In terms of assembly, interacts with the terminase subunits TRM1 and TRM2. Interacts with portal protein.

The protein resides in the host nucleus. In terms of biological role, component of the molecular motor that translocates viral genomic DNA in empty capsid during DNA packaging. Forms a tripartite terminase complex together with TRM1 and TRM2 in the host cytoplasm. Once the complex reaches the host nucleus, it interacts with the capsid portal vertex. This portal forms a ring in which genomic DNA is translocated into the capsid. TRM3 carries an RNase H-like nuclease activity that plays an important role for the cleavage of concatemeric viral DNA into unit length genomes. This is Tripartite terminase subunit 3 from Human herpesvirus 7 (strain JI) (HHV-7).